Reading from the N-terminus, the 1076-residue chain is Atos homolog protein A (1076 aa).

Residues 24–32 (ALLITEGRT) are transactivation domain 1 (TAD1). Disordered stretches follow at residues 700-721 (ESMSSNKDSKRPKTCEQNTQLN) and 739-765 (SDQLKNEQDKQEDPTNEKSQNYSQRRS). The span at 739–754 (SDQLKNEQDKQEDPTN) shows a compositional bias: basic and acidic residues. Positions 878-935 (LLGNFEESVLNYRFDPLGIVDGFTAEVGASGAFCPTHLTLPVEVSFYSVSDDNAPSPY) are required for macropage invasion. Residues 962–970 (FNPNKTVVK) are transactivation domain 2 (TAD2).

This sequence belongs to the ATOS family.

Its subcellular location is the nucleus. Transcription regulator that syncronizes transcriptional and translational programs to promote macrophage invasion of tissues. This Homo sapiens (Human) protein is Atos homolog protein A.